The chain runs to 319 residues: Ribose-phosphate pyrophosphokinase (319 aa).

ATP-binding positions include 40-42 (DGE) and 99-100 (RQ). The Mg(2+) site is built by His-134 and Asp-174. The active site involves Lys-198. Residues Arg-200, Asp-224, and 228 to 232 (DTAGT) each bind D-ribose 5-phosphate.

This sequence belongs to the ribose-phosphate pyrophosphokinase family. Class I subfamily. Homohexamer. It depends on Mg(2+) as a cofactor.

The protein resides in the cytoplasm. The catalysed reaction is D-ribose 5-phosphate + ATP = 5-phospho-alpha-D-ribose 1-diphosphate + AMP + H(+). It participates in metabolic intermediate biosynthesis; 5-phospho-alpha-D-ribose 1-diphosphate biosynthesis; 5-phospho-alpha-D-ribose 1-diphosphate from D-ribose 5-phosphate (route I): step 1/1. Functionally, involved in the biosynthesis of the central metabolite phospho-alpha-D-ribosyl-1-pyrophosphate (PRPP) via the transfer of pyrophosphoryl group from ATP to 1-hydroxyl of ribose-5-phosphate (Rib-5-P). This chain is Ribose-phosphate pyrophosphokinase, found in Xanthomonas axonopodis pv. citri (strain 306).